Consider the following 81-residue polypeptide: Large ribosomal subunit protein bL31B (81 aa).

This sequence belongs to the bacterial ribosomal protein bL31 family. Type B subfamily. Part of the 50S ribosomal subunit.

This Borreliella afzelii (strain PKo) (Borrelia afzelii) protein is Large ribosomal subunit protein bL31B.